The chain runs to 329 residues: Holliday junction branch migration complex subunit RuvB (329 aa).

The tract at residues 1-181 is large ATPase domain (RuvB-L); that stretch reads MNELLHQHKA…FGIPLHLEFY (181 aa). ATP contacts are provided by Leu20, Arg21, Gly62, Lys65, Thr66, Thr67, Arg171, Tyr181, and Arg218. Thr66 is a Mg(2+) binding site. Positions 182-252 are small ATPAse domain (RuvB-S); the sequence is SVEELMLVIK…FADSALFNLG (71 aa). Residues 255–329 form a head domain (RuvB-H) region; sequence KSGLDKMDIK…IEHLMNYKYI (75 aa). 2 residues coordinate DNA: Arg308 and Arg313.

Belongs to the RuvB family. As to quaternary structure, homohexamer. Forms an RuvA(8)-RuvB(12)-Holliday junction (HJ) complex. HJ DNA is sandwiched between 2 RuvA tetramers; dsDNA enters through RuvA and exits via RuvB. An RuvB hexamer assembles on each DNA strand where it exits the tetramer. Each RuvB hexamer is contacted by two RuvA subunits (via domain III) on 2 adjacent RuvB subunits; this complex drives branch migration. In the full resolvosome a probable DNA-RuvA(4)-RuvB(12)-RuvC(2) complex forms which resolves the HJ.

Its subcellular location is the cytoplasm. The catalysed reaction is ATP + H2O = ADP + phosphate + H(+). In terms of biological role, the RuvA-RuvB-RuvC complex processes Holliday junction (HJ) DNA during genetic recombination and DNA repair, while the RuvA-RuvB complex plays an important role in the rescue of blocked DNA replication forks via replication fork reversal (RFR). RuvA specifically binds to HJ cruciform DNA, conferring on it an open structure. The RuvB hexamer acts as an ATP-dependent pump, pulling dsDNA into and through the RuvAB complex. RuvB forms 2 homohexamers on either side of HJ DNA bound by 1 or 2 RuvA tetramers; 4 subunits per hexamer contact DNA at a time. Coordinated motions by a converter formed by DNA-disengaged RuvB subunits stimulates ATP hydrolysis and nucleotide exchange. Immobilization of the converter enables RuvB to convert the ATP-contained energy into a lever motion, pulling 2 nucleotides of DNA out of the RuvA tetramer per ATP hydrolyzed, thus driving DNA branch migration. The RuvB motors rotate together with the DNA substrate, which together with the progressing nucleotide cycle form the mechanistic basis for DNA recombination by continuous HJ branch migration. Branch migration allows RuvC to scan DNA until it finds its consensus sequence, where it cleaves and resolves cruciform DNA. The sequence is that of Holliday junction branch migration complex subunit RuvB from Anaplasma phagocytophilum (strain HZ).